The primary structure comprises 522 residues: Cytochrome P450 monooxygenase AKT7 (522 aa).

The helical transmembrane segment at 10-30 (LYVTCTVLAALILGYIQAMII) threads the bilayer. A heme-binding site is contributed by Cys-452.

It belongs to the cytochrome P450 family. The cofactor is heme.

Its subcellular location is the membrane. Its pathway is mycotoxin biosynthesis. In terms of biological role, cytochrome P450 monooxygenase; part of the gene clusters that mediate the biosynthesis of the host-selective toxins (HSTs) AK-toxins responsible for Japanese pear black spot disease by the Japanese pear pathotype. AK-toxins are esters of 9,10-epoxy 8-hydroxy 9-methyldecatrienoic acid (EDA). On cellular level, AK-toxins affect plasma membrane of susceptible cells and cause a sudden increase in loss of K(+) after a few minutes of toxin treatment. The acyl-CoA ligase AKT1, the hydrolase AKT2 and enoyl-CoA hydratase AKT3 are all involved in the biosynthesis of the AK-, AF- and ACT-toxin common 9,10-epoxy-8-hydroxy-9-methyl-decatrienoic acid (EDA) structural moiety. Part of the EDA biosynthesis occurs in the peroxisome since these 3 enzymes are localized in peroxisomes. The exact roles of the 3 enzymes, as well as of additional AK-toxin clusters enzymes, including AKT4, AKT6 and AKTS1, have still to be elucidated. The Cytochrome P450 monooxygenase AKT7 on the other side functions to limit production of EDA and AK-toxin, probably via the catalysis of a side reaction of EDA or its precursor. This is Cytochrome P450 monooxygenase AKT7 from Alternaria alternata (Alternaria rot fungus).